A 157-amino-acid chain; its full sequence is Ribosome-binding factor A (157 aa).

The tract at residues 124–157 is disordered; the sequence is SAGAQFAGDADPYRKPESDDESDTAAKTDGDAAE. Residues 147-157 show a composition bias toward basic and acidic residues; it reads TAAKTDGDAAE.

Belongs to the RbfA family. Monomer. Binds 30S ribosomal subunits, but not 50S ribosomal subunits or 70S ribosomes.

It localises to the cytoplasm. In terms of biological role, one of several proteins that assist in the late maturation steps of the functional core of the 30S ribosomal subunit. Associates with free 30S ribosomal subunits (but not with 30S subunits that are part of 70S ribosomes or polysomes). Required for efficient processing of 16S rRNA. May interact with the 5'-terminal helix region of 16S rRNA. The protein is Ribosome-binding factor A of Streptomyces avermitilis (strain ATCC 31267 / DSM 46492 / JCM 5070 / NBRC 14893 / NCIMB 12804 / NRRL 8165 / MA-4680).